The following is a 233-amino-acid chain: Large ribosomal subunit protein uL1 (233 aa).

The protein belongs to the universal ribosomal protein uL1 family. In terms of assembly, part of the 50S ribosomal subunit.

Binds directly to 23S rRNA. The L1 stalk is quite mobile in the ribosome, and is involved in E site tRNA release. Its function is as follows. Protein L1 is also a translational repressor protein, it controls the translation of the L11 operon by binding to its mRNA. In Aeromonas salmonicida (strain A449), this protein is Large ribosomal subunit protein uL1.